The chain runs to 229 residues: Probable transmembrane reductase CYB561D1 (229 aa).

At 1–24 (MQPLEVGLVPAPAGEPRLTRWLRR) the chain is on the cytoplasmic side. Residues 22 to 224 (LRRGSGILAH…HQISRSYLPR (203 aa)) enclose the Cytochrome b561 domain. The chain crosses the membrane as a helical span at residues 25 to 45 (GSGILAHLVALGFTIFLTALS). At 46-53 (RPGTSLFS) the chain is on the lumenal side. Residues 54-74 (WHPVFMALAFCLCMAEAILLF) form a helical membrane-spanning segment. Residue His55 participates in heme b binding. Over 75–91 (SPEHSLFFFCSRKARIR) the chain is Cytoplasmic. The helical transmembrane segment at 92–112 (LHWAGQTLAILCAALGLGFII) threads the bilayer. Heme b-binding residues include His93 and His127. Over 113-128 (SSRTRSELPHLVSWHS) the chain is Lumenal. A helical transmembrane segment spans residues 129-149 (WVGALTLLATAVQALCGLCLL). Residues 150–169 (CPRAARVSRVARLKLYHLTC) lie on the Cytoplasmic side of the membrane. His166 serves as a coordination point for heme b. A helical membrane pass occupies residues 170–190 (GLVVYLMATVTVLLGMYSVWF). Residues 191 to 193 (QAQ) lie on the Lumenal side of the membrane. The helical transmembrane segment at 194 to 214 (IKGAAWYLCLALPVYPALVIM) threads the bilayer. Residues 215–229 (HQISRSYLPRKKMEM) lie on the Cytoplasmic side of the membrane.

It depends on heme b as a cofactor.

It localises to the membrane. The enzyme catalyses monodehydro-L-ascorbate radical(out) + L-ascorbate(in) = monodehydro-L-ascorbate radical(in) + L-ascorbate(out). It catalyses the reaction Fe(3+)(out) + L-ascorbate(in) = monodehydro-L-ascorbate radical(in) + Fe(2+)(out) + H(+). In terms of biological role, probable transmembrane reductase that may use ascorbate as an electron donor and transfer electrons across membranes to reduce monodehydro-L-ascorbate radical and iron cations Fe(3+) in another cellular compartment. In Homo sapiens (Human), this protein is Probable transmembrane reductase CYB561D1.